Reading from the N-terminus, the 745-residue chain is Phosphoribosylformylglycinamidine synthase subunit PurL (745 aa).

Residue H50 is part of the active site. ATP-binding residues include Y53 and K92. Mg(2+) is bound at residue E94. Residues 95 to 98 (SHNH) and R117 contribute to the substrate site. Catalysis depends on H96, which acts as the Proton acceptor. D118 is a binding site for Mg(2+). Residue Q241 participates in substrate binding. D269 contacts Mg(2+). Residue 313-315 (ESQ) participates in substrate binding. 2 residues coordinate ATP: D495 and G532. N533 provides a ligand contact to Mg(2+). S535 is a substrate binding site.

The protein belongs to the FGAMS family. Monomer. Part of the FGAM synthase complex composed of 1 PurL, 1 PurQ and 2 PurS subunits.

It localises to the cytoplasm. It carries out the reaction N(2)-formyl-N(1)-(5-phospho-beta-D-ribosyl)glycinamide + L-glutamine + ATP + H2O = 2-formamido-N(1)-(5-O-phospho-beta-D-ribosyl)acetamidine + L-glutamate + ADP + phosphate + H(+). Its pathway is purine metabolism; IMP biosynthesis via de novo pathway; 5-amino-1-(5-phospho-D-ribosyl)imidazole from N(2)-formyl-N(1)-(5-phospho-D-ribosyl)glycinamide: step 1/2. Functionally, part of the phosphoribosylformylglycinamidine synthase complex involved in the purines biosynthetic pathway. Catalyzes the ATP-dependent conversion of formylglycinamide ribonucleotide (FGAR) and glutamine to yield formylglycinamidine ribonucleotide (FGAM) and glutamate. The FGAM synthase complex is composed of three subunits. PurQ produces an ammonia molecule by converting glutamine to glutamate. PurL transfers the ammonia molecule to FGAR to form FGAM in an ATP-dependent manner. PurS interacts with PurQ and PurL and is thought to assist in the transfer of the ammonia molecule from PurQ to PurL. The protein is Phosphoribosylformylglycinamidine synthase subunit PurL of Allorhizobium ampelinum (strain ATCC BAA-846 / DSM 112012 / S4) (Agrobacterium vitis (strain S4)).